The chain runs to 483 residues: Altronate oxidoreductase (483 aa).

18–29 contributes to the NAD(+) binding site; that stretch reads IIQFGEGNFLRA.

It belongs to the mannitol dehydrogenase family. UxaB subfamily.

It carries out the reaction D-altronate + NAD(+) = keto-D-tagaturonate + NADH + H(+). It functions in the pathway carbohydrate metabolism; pentose and glucuronate interconversion. The protein is Altronate oxidoreductase of Escherichia coli O17:K52:H18 (strain UMN026 / ExPEC).